The primary structure comprises 172 residues: Shikimate kinase (172 aa).

Residue 11-16 participates in ATP binding; sequence GAGKST. S15 is a binding site for Mg(2+). Substrate is bound by residues D33, R57, and G79. An ATP-binding site is contributed by R117. R136 serves as a coordination point for substrate. Residue R153 participates in ATP binding.

Belongs to the shikimate kinase family. In terms of assembly, monomer. Mg(2+) is required as a cofactor.

It localises to the cytoplasm. It carries out the reaction shikimate + ATP = 3-phosphoshikimate + ADP + H(+). The protein operates within metabolic intermediate biosynthesis; chorismate biosynthesis; chorismate from D-erythrose 4-phosphate and phosphoenolpyruvate: step 5/7. In terms of biological role, catalyzes the specific phosphorylation of the 3-hydroxyl group of shikimic acid using ATP as a cosubstrate. This chain is Shikimate kinase, found in Pseudomonas aeruginosa (strain LESB58).